The primary structure comprises 396 residues: Tryptophan synthase beta chain (396 aa).

At Lys88 the chain carries N6-(pyridoxal phosphate)lysine.

It belongs to the TrpB family. As to quaternary structure, tetramer of two alpha and two beta chains. Pyridoxal 5'-phosphate is required as a cofactor.

The enzyme catalyses (1S,2R)-1-C-(indol-3-yl)glycerol 3-phosphate + L-serine = D-glyceraldehyde 3-phosphate + L-tryptophan + H2O. It participates in amino-acid biosynthesis; L-tryptophan biosynthesis; L-tryptophan from chorismate: step 5/5. Its function is as follows. The beta subunit is responsible for the synthesis of L-tryptophan from indole and L-serine. The chain is Tryptophan synthase beta chain from Leptospira biflexa serovar Patoc (strain Patoc 1 / Ames).